Consider the following 377-residue polypeptide: MKTLPLFVCICALSACFSFSEGRERDHELRHRRHHHQSPKSHFELPHYPGLLAHQKPFIRKSYKCLHKRCRPKLPPSPNNPPKFPNPHQPPKHPDKNSSVVNPTLVATTQIPSVTFPSASTKITTLPNVTFLPQNATTISSRENVNTSSSVATLAPVNSPAPQDTTAAPPTPSATTPAPPSSSAPPETTAAPPTPSATTQAPPSSSAPPETTAAPPTPPATTPAPPSSSAPPETTAAPPTPSATTPAPLSSSAPPETTAVPPTPSATTLDPSSASAPPETTAAPPTPSATTPAPPSSPAPQETTAAPITTPNSSPTTLAPDTSETSAAPTHQTTTSVTTQTTTTKQPTSAPGQNKISRFLLYMKNLLNRIIDDMVEQ.

An N-terminal signal peptide occupies residues 1–22; the sequence is MKTLPLFVCICALSACFSFSEG. Residues 70–100 are disordered; it reads CRPKLPPSPNNPPKFPNPHQPPKHPDKNSSV. Positions 73–89 are enriched in pro residues; the sequence is KLPPSPNNPPKFPNPHQ. Residues Asn97, Asn128, Asn135, and Asn146 are each glycosylated (N-linked (GlcNAc...) asparagine). The disordered stretch occupies residues 150–355; sequence SVATLAPVNS…QPTSAPGQNK (206 aa). A run of 6 repeats spans residues 165-187, 188-210, 211-233, 234-256, 257-279, and 280-302. Positions 169 to 183 are enriched in pro residues; that stretch reads PPTPSATTPAPPSSS. Thr176 carries an O-linked (GalNAc) threonine; by GALNT13 glycan. Residues Ser182 and Ser183 are each glycosylated (O-linked (GalNAc) serine; by GALNT13). Positions 184–214 are enriched in low complexity; the sequence is APPETTAAPPTPSATTQAPPSSSAPPETTAA. O-linked (GalNAc) threonine; by GALNT13 glycosylation is found at Thr188 and Thr189. Pro residues predominate over residues 215 to 229; the sequence is PPTPPATTPAPPSSS. The segment covering 230–283 has biased composition (low complexity); sequence APPETTAAPPTPSATTPAPLSSSAPPETTAVPPTPSATTLDPSSASAPPETTAA. Residues 284–298 show a composition bias toward pro residues; the sequence is PPTPSATTPAPPSSP. Over residues 309–329 the composition is skewed to polar residues; sequence TTPNSSPTTLAPDTSETSAAP. The segment covering 330-348 has biased composition (low complexity); the sequence is THQTTTSVTTQTTTTKQPT.

Monomer. In terms of processing, N- and O-glycosylated. Contains fucose, mannose, galactose, N-acetylglucosamine and N-acetylgalactosamine. In terms of tissue distribution, expressed in salivary gland tissues and only in those that contain mucous acinar cells (e.g. sublingual and submandibular glands) and not in salivary glands containing only serous acinar cells (e.g. parotid gland).

The protein localises to the secreted. May function in a protective capacity by promoting the clearance of bacteria in the oral cavity and aiding in mastication, speech, and swallowing. Binds P.aeruginosa pili. This Homo sapiens (Human) protein is Mucin-7 (MUC7).